The chain runs to 180 residues: Adenine phosphoribosyltransferase (180 aa).

At Ala2 the chain carries N-acetylalanine. Phosphoserine is present on residues Ser4, Ser15, and Ser30. The residue at position 60 (Tyr60) is a Phosphotyrosine. Position 66 is a phosphoserine (Ser66). N6-acetyllysine is present on Lys114. At Thr135 the chain carries Phosphothreonine.

This sequence belongs to the purine/pyrimidine phosphoribosyltransferase family. In terms of assembly, homodimer.

Its subcellular location is the cytoplasm. The enzyme catalyses AMP + diphosphate = 5-phospho-alpha-D-ribose 1-diphosphate + adenine. The protein operates within purine metabolism; AMP biosynthesis via salvage pathway; AMP from adenine: step 1/1. Functionally, catalyzes a salvage reaction resulting in the formation of AMP, that is energically less costly than de novo synthesis. In Homo sapiens (Human), this protein is Adenine phosphoribosyltransferase.